A 513-amino-acid polypeptide reads, in one-letter code: 2-isopropylmalate synthase (513 aa).

One can recognise a Pyruvate carboxyltransferase domain in the interval Leu5–Val268. Asp14, His202, His204, and Asn239 together coordinate Mn(2+). A regulatory domain region spans residues Arg394–Gly513.

Belongs to the alpha-IPM synthase/homocitrate synthase family. LeuA type 1 subfamily. As to quaternary structure, homodimer. Mn(2+) serves as cofactor.

The protein localises to the cytoplasm. The catalysed reaction is 3-methyl-2-oxobutanoate + acetyl-CoA + H2O = (2S)-2-isopropylmalate + CoA + H(+). It participates in amino-acid biosynthesis; L-leucine biosynthesis; L-leucine from 3-methyl-2-oxobutanoate: step 1/4. Functionally, catalyzes the condensation of the acetyl group of acetyl-CoA with 3-methyl-2-oxobutanoate (2-ketoisovalerate) to form 3-carboxy-3-hydroxy-4-methylpentanoate (2-isopropylmalate). In Methylibium petroleiphilum (strain ATCC BAA-1232 / LMG 22953 / PM1), this protein is 2-isopropylmalate synthase.